Consider the following 1169-residue polypeptide: Rabankyrin-5 (1169 aa).

A2 is modified (N-acetylalanine). The BTB domain maps to 68 to 130 (SDLKIKVGDR…IYTDELEFRE (63 aa)). ANK repeat units follow at residues 217–247 (KTEY…QLPG), 255–284 (NGDL…DVDM), 288–317 (NGWS…LVNA), 322–362 (AQET…NPNM), and 366–396 (KGRT…DLEL). Phosphoserine is present on S270. Positions 421 to 423 (NPF) match the NPF motif. 16 ANK repeats span residues 490-519 (WGET…NPNL), 542-572 (YLQT…ALHA), 588-617 (RDQT…SIND), 621-650 (DGQT…DINV), 654-683 (DGET…DMSV), 687-716 (KGNP…DATC), 724-753 (CLQT…DVNS), 769-798 (DGQT…NVNA), 802-832 (EGRT…ELSV), 836-865 (QGLT…GAAE), 870-899 (KGRN…NVNS), 905-934 (SKLT…KVNE), 938-967 (HRQT…DFAA), 971-1001 (NGNN…DAEA), 1005-1037 (RGQS…EYPL), and 1043-1072 (EGNT…RLGV). Residues 650 to 759 (VRTQDGETAL…DVNSPRQPGT (110 aa)) form an interaction with RHOD and RAB5A region. The FYVE-type zinc finger occupies 1104–1164 (WCDGSNCYEC…VCNICFDVLT (61 aa)). The Zn(2+) site is built by C1110, C1113, C1126, C1129, C1134, C1137, C1156, and C1159.

As to quaternary structure, interacts with RAB5A (in GTP-bound form). Interacts with RHOD (independent of GTP-loaded status). Interacts with EHD1. Interacts with VPS26A; the interaction is independent of EHD1 and is indicative for an association with the cargo recognition subcomplex of the retromer complex. In terms of tissue distribution, expressed in kidney proximal tubule epithelial cells; at protein level.

The protein resides in the cytoplasm. Its subcellular location is the endosome membrane. It localises to the cytoplasmic vesicle. Functionally, proposed effector of Rab5. Binds to phosphatidylinositol 3-phosphate (PI(3)P). Involved in homotypic early endosome fusion and to a lesser extent in heterotypic fusion of chlathrin-coated vesicles with early endosomes. Required for correct endosomal localization. Involved in the internalization and trafficking of activated tyrosine kinase receptors such as PDGFRB. Regulates the subcellular localization of the retromer complex in a EHD1-dependent manner. Involved in endosome-to-Golgi transport and biosynthetic transport to late endosomes and lysosomes indicative for a regulation of retromer complex-mediated retrograde transport. Involved in macropinocytosis; the function is dependent on Rab5-GTP. The sequence is that of Rabankyrin-5 (Ankfy1) from Mus musculus (Mouse).